The chain runs to 206 residues: Dephospho-CoA kinase (206 aa).

The 201-residue stretch at 4-204 (IVGLTGGIGS…QFYLQQAENK (201 aa)) folds into the DPCK domain. An ATP-binding site is contributed by 12–17 (GSGKTT).

The protein belongs to the CoaE family.

It localises to the cytoplasm. It catalyses the reaction 3'-dephospho-CoA + ATP = ADP + CoA + H(+). The protein operates within cofactor biosynthesis; coenzyme A biosynthesis; CoA from (R)-pantothenate: step 5/5. In terms of biological role, catalyzes the phosphorylation of the 3'-hydroxyl group of dephosphocoenzyme A to form coenzyme A. In Haemophilus influenzae (strain 86-028NP), this protein is Dephospho-CoA kinase.